The following is a 445-amino-acid chain: 23S rRNA (uracil(1939)-C(5))-methyltransferase RlmD (445 aa).

Residues 12–70 (SKQLSSKLSLKVTQLDHLGAGIAHHDGKIVFINGALPGETVSVQLTEQKKKFARAKLLK) enclose the TRAM domain. The [4Fe-4S] cluster site is built by Cys83, Cys89, Cys92, and Cys171. The S-adenosyl-L-methionine site is built by Gln278, Phe307, Asn312, Glu328, Asp355, and Asp375. Catalysis depends on Cys401, which acts as the Nucleophile.

It belongs to the class I-like SAM-binding methyltransferase superfamily. RNA M5U methyltransferase family. RlmD subfamily.

It catalyses the reaction uridine(1939) in 23S rRNA + S-adenosyl-L-methionine = 5-methyluridine(1939) in 23S rRNA + S-adenosyl-L-homocysteine + H(+). Catalyzes the formation of 5-methyl-uridine at position 1939 (m5U1939) in 23S rRNA. The chain is 23S rRNA (uracil(1939)-C(5))-methyltransferase RlmD from Shewanella halifaxensis (strain HAW-EB4).